The sequence spans 307 residues: Acyl transferase (307 aa).

Active-site charge relay system residues include S116, D213, and H243.

It belongs to the LuxD family.

Its pathway is lipid metabolism; fatty acid reduction for biolumincescence. Functionally, acyl transferase is part of the fatty acid reductase system required for aldehyde biosynthesis; it produces fatty acids for the luminescent reaction. This is Acyl transferase from Photorhabdus luminescens (Xenorhabdus luminescens).